Reading from the N-terminus, the 524-residue chain is Nif-specific regulatory protein (524 aa).

An a domain region spans residues 1–182 (MIHKSDSDTT…AQTIRLMILP (182 aa)). Residues 35 to 176 (EASKTLQEVL…TVANLIAQTI (142 aa)) form the GAF domain. A Sigma-54 factor interaction domain is found at 212–481 (MVGKSPAMRQ…DGWLDNSLDE (270 aa)). ATP is bound by residues 240-247 (GESGTGKE) and 303-312 (ADGGTLFLDE). The C-terminal DNA-binding domain stretch occupies residues 482–524 (RQRLIAALEKAGWVQAKAARLLGMTPRQVAYRIQIMDITMPRL). The segment at residues 496–515 (QAKAARLLGMTPRQVAYRIQ) is a DNA-binding region (H-T-H motif).

As to quaternary structure, interacts with sigma-54.

Required for activation of most nif operons, which are directly involved in nitrogen fixation. The protein is Nif-specific regulatory protein (nifA) of Klebsiella pneumoniae.